Reading from the N-terminus, the 722-residue chain is Zinc finger protein 600 (722 aa).

Residues 162–184 form a C2H2-type 1; degenerate zinc finger; it reads FQCNESGKAFNCSSLLRKHQIPH. 9 consecutive C2H2-type zinc fingers follow at residues 190 to 212, 218 to 240, 246 to 268, 274 to 296, 302 to 324, 330 to 352, 358 to 380, 386 to 408, and 414 to 436; these read YKCD…CRCH, YKCN…RRLH, HKCN…KAIH, YKCN…RRIH, YKCE…KRIH, YKCK…KRIH, YKCN…HRLH, YKCK…TRIH, and YKCN…KSIH. The C2H2-type 11; degenerate zinc finger occupies 442–464; it reads YKYEECEKVFSCGSTLETHKIIH. C2H2-type zinc fingers lie at residues 470 to 492, 498 to 520, 526 to 548, 554 to 576, 582 to 604, 610 to 632, 638 to 660, 666 to 688, and 694 to 716; these read YKCK…TRIH, YKCN…RRVH, YKCN…RRLH, YKCT…TRIH, YKCN…HRIH, YKCE…RRIH, YKCK…TGLH, and YKCN…QAVH.

The protein belongs to the krueppel C2H2-type zinc-finger protein family.

The protein localises to the nucleus. In terms of biological role, may be involved in transcriptional regulation. This Homo sapiens (Human) protein is Zinc finger protein 600 (ZNF600).